Consider the following 302-residue polypeptide: Acetylglutamate kinase (302 aa).

Substrate is bound by residues 67-68, Arg-89, and Asn-189; that span reads GG.

This sequence belongs to the acetylglutamate kinase family. ArgB subfamily.

The protein localises to the cytoplasm. It carries out the reaction N-acetyl-L-glutamate + ATP = N-acetyl-L-glutamyl 5-phosphate + ADP. It functions in the pathway amino-acid biosynthesis; L-arginine biosynthesis; N(2)-acetyl-L-ornithine from L-glutamate: step 2/4. Catalyzes the ATP-dependent phosphorylation of N-acetyl-L-glutamate. The chain is Acetylglutamate kinase from Streptomyces clavuligerus.